The following is a 1190-amino-acid chain: Ras-specific guanine nucleotide-releasing factor 2 (1190 aa).

The region spanning 22-133 (EGTKRGFLSK…WMEAIHQASY (112 aa)) is the PH 1 domain. Residues 155–193 (ETEKIAANQLRHQLEDQDTEIERLKSEIVALNKTKERMR) are a coiled coil. One can recognise an IQ domain in the interval 205–234 (DIKKIKKVQSFMRGWLCRRKWKTIVQDYIC). In terms of domain architecture, DH spans 243–429 (KRNQIVFTMV…EELSRVMHDE (187 aa)). Residues 470–588 (PSVERGKLSK…WMSDISQCVD (119 aa)) form the PH 2 domain. The region spanning 635–755 (KVPQIRYASV…LTSSLNSRIG (121 aa)) is the N-terminal Ras-GEF domain. Positions 713-744 (VDGKSPRLCRKFSSPPPLAVSRTSSPVRARKL) are disordered. A phosphoserine mark is found at serine 725 and serine 726. Serine 736 is modified (phosphoserine; by CDK5). Residues 743–751 (KLSLTSSLN) form a regulates proteasomal degradation region. Phosphoserine occurs at positions 745 and 749. The interval 757–826 (LDLTTSSSSS…QPGGQVADST (70 aa)) is disordered. Over residues 760 to 776 (TTSSSSSSPTTTVHSPA) the composition is skewed to low complexity. Positions 798 to 810 (TDMSPCRSPSTTP) are enriched in polar residues. Residues serine 801, serine 805, and serine 925 each carry the phosphoserine modification. The region spanning 955-1187 (SAMELAEQIT…YELSLKIEPR (233 aa)) is the Ras-GEF domain. Residues 1052–1081 (ALNRSAIYRLKKTWTKVSKQTKALMDKLQK) form a responsible of the affinity for farnesylated versus geranylgeranylated Ras region.

Homooligomer and heterooligomer with RASGRF1. Interacts with Ras and RAC1. Interacts in a calcium-dependent manner with calmodulin. Interacts with CDK5R1 and probably EPB49. Interacts with the AMPA receptor through GRIA1. Interacts with microtubules. In terms of processing, phosphorylated by CDK5; down-regulates RASGRF2-mediated RAC1 activation. Ubiquitinated upon interaction with Ras. Ubiquitination leads to degradation through the 26S proteasome. As to expression, widely expressed. Detected in brain, lung, spleen, pancreas, kidney, liver, heart, mammary gland and skeletal muscle.

Its subcellular location is the cytoplasm. The protein localises to the cell membrane. It localises to the endoplasmic reticulum membrane. In terms of biological role, functions as a calcium-regulated nucleotide exchange factor activating both Ras and RAC1 through the exchange of bound GDP for GTP. Preferentially activates HRAS in vivo compared to RRAS based on their different types of prenylation. Functions in synaptic plasticity by contributing to the induction of long term potentiation. This Rattus norvegicus (Rat) protein is Ras-specific guanine nucleotide-releasing factor 2 (Rasgrf2).